The following is a 206-amino-acid chain: uncharacterized protein (206 aa).

Disordered regions lie at residues 64–123 (NTES…DPSL) and 155–206 (VTTP…SSGG). A compositionally biased stretch (polar residues) spans 66–79 (ESTQKTATTQQQGL). Positions 97-107 (AENNAQANQSE) are enriched in low complexity. Residues 108–118 (NRAESTTKAES) are compositionally biased toward basic and acidic residues. The segment covering 155 to 167 (VTTPTGQVVQPQT) has biased composition (low complexity). Polar residues predominate over residues 182–198 (GSMNSKPVSRGGFSSPN).

This is an uncharacterized protein from Haemophilus influenzae (strain ATCC 51907 / DSM 11121 / KW20 / Rd).